We begin with the raw amino-acid sequence, 203 residues long: Large ribosomal subunit protein bL25 (203 aa).

The protein belongs to the bacterial ribosomal protein bL25 family. CTC subfamily. Part of the 50S ribosomal subunit; part of the 5S rRNA/L5/L18/L25 subcomplex. Contacts the 5S rRNA. Binds to the 5S rRNA independently of L5 and L18.

Functionally, this is one of the proteins that binds to the 5S RNA in the ribosome where it forms part of the central protuberance. The protein is Large ribosomal subunit protein bL25 of Rickettsia prowazekii (strain Madrid E).